Reading from the N-terminus, the 82-residue chain is ATP synthase subunit 9, mitochondrial (82 aa).

Helical transmembrane passes span 8–28 and 45–67; these read IGAG…GNVF and SFGY…PMMA.

It belongs to the ATPase C chain family. F-type ATPases have 2 components, CF(1) - the catalytic core - and CF(0) - the membrane proton channel. CF(1) has five subunits: alpha(3), beta(3), gamma(1), delta(1), epsilon(1). CF(0) has three main subunits: a, b and c.

Its subcellular location is the mitochondrion membrane. Functionally, this protein is one of the chains of the nonenzymatic membrane component (F0) of mitochondrial ATPase. This is ATP synthase subunit 9, mitochondrial (ATP9) from Malus domestica (Apple).